The following is a 552-amino-acid chain: Dihydroxy-acid dehydratase (552 aa).

Aspartate 78 is a binding site for Mg(2+). Cysteine 119 contributes to the [2Fe-2S] cluster binding site. Residues aspartate 120 and lysine 121 each contribute to the Mg(2+) site. An N6-carboxylysine modification is found at lysine 121. Residue cysteine 191 coordinates [2Fe-2S] cluster. Glutamate 442 contacts Mg(2+). The active-site Proton acceptor is the serine 468.

It belongs to the IlvD/Edd family. In terms of assembly, homodimer. [2Fe-2S] cluster is required as a cofactor. It depends on Mg(2+) as a cofactor.

The catalysed reaction is (2R)-2,3-dihydroxy-3-methylbutanoate = 3-methyl-2-oxobutanoate + H2O. The enzyme catalyses (2R,3R)-2,3-dihydroxy-3-methylpentanoate = (S)-3-methyl-2-oxopentanoate + H2O. The protein operates within amino-acid biosynthesis; L-isoleucine biosynthesis; L-isoleucine from 2-oxobutanoate: step 3/4. It participates in amino-acid biosynthesis; L-valine biosynthesis; L-valine from pyruvate: step 3/4. In terms of biological role, functions in the biosynthesis of branched-chain amino acids. Catalyzes the dehydration of (2R,3R)-2,3-dihydroxy-3-methylpentanoate (2,3-dihydroxy-3-methylvalerate) into 2-oxo-3-methylpentanoate (2-oxo-3-methylvalerate) and of (2R)-2,3-dihydroxy-3-methylbutanoate (2,3-dihydroxyisovalerate) into 2-oxo-3-methylbutanoate (2-oxoisovalerate), the penultimate precursor to L-isoleucine and L-valine, respectively. This is Dihydroxy-acid dehydratase from Ruminiclostridium cellulolyticum (strain ATCC 35319 / DSM 5812 / JCM 6584 / H10) (Clostridium cellulolyticum).